The following is a 356-amino-acid chain: Sporulation minus regulator 1 (356 aa).

The DNA-binding element occupies 183-199; sequence HPLRQLPGNPWHKFFGN.

This sequence to N.crassa mta-2.

It is found in the nucleus. In terms of biological role, transcriptional activator that is required for post-fertilization events. It is required for the developmental events that occur in the female organ after fertilization. This is Sporulation minus regulator 1 (SMR1) from Podospora anserina (Pleurage anserina).